We begin with the raw amino-acid sequence, 380 residues long: MAPNLRKSHPLLKMVNNSLIDLPAPSNISAWWNFGSLLGICLLTQILTGLLLAMHYTADTTLAFSSVAHTCRNVQYGWLIRNLHANGASFFFICIYLHIGRGFYYGSYLYKETWNTGVILLLTLMATAFVGYVLPWGQMSFWGATVITNLFSAIPYIGQTLVEWAWGGFSVDNPTLTRFFALHFLLPFMIAGLTLIHLTFLHESGSNNPLGIVSNCDKIPFHPYFTLKDILGFMLLLLPLTTLALFSPNLLGDPENFTPANPLVTPPHIKPEWYFLFAYAILRSIPNKLGGVLALAASVLVLFLAPFLHKAKQRAMTFRPISQLLFWILVANLFILTWVGSQPVEHPFIIIGQLASLTYFTILLILFPITGALENKMLNY.

4 consecutive transmembrane segments (helical) span residues 34-54, 78-99, 114-134, and 179-199; these read FGSLLGICLLTQILTGLLLAM, WLIRNLHANGASFFFICIYLHI, WNTGVILLLTLMATAFVGYVL, and FFALHFLLPFMIAGLTLIHLT. The heme b site is built by His-84 and His-98. The heme b site is built by His-183 and His-197. His-202 provides a ligand contact to a ubiquinone. 4 consecutive transmembrane segments (helical) span residues 227 to 247, 289 to 309, 321 to 341, and 348 to 368; these read LKDILGFMLLLLPLTTLALFS, LGGVLALAASVLVLFLAPFLH, ISQLLFWILVANLFILTWVGS, and FIIIGQLASLTYFTILLILFP.

Belongs to the cytochrome b family. In terms of assembly, the cytochrome bc1 complex contains 11 subunits: 3 respiratory subunits (MT-CYB, CYC1 and UQCRFS1), 2 core proteins (UQCRC1 and UQCRC2) and 6 low-molecular weight proteins (UQCRH/QCR6, UQCRB/QCR7, UQCRQ/QCR8, UQCR10/QCR9, UQCR11/QCR10 and a cleavage product of UQCRFS1). This cytochrome bc1 complex then forms a dimer. Heme b serves as cofactor.

It localises to the mitochondrion inner membrane. In terms of biological role, component of the ubiquinol-cytochrome c reductase complex (complex III or cytochrome b-c1 complex) that is part of the mitochondrial respiratory chain. The b-c1 complex mediates electron transfer from ubiquinol to cytochrome c. Contributes to the generation of a proton gradient across the mitochondrial membrane that is then used for ATP synthesis. This is Cytochrome b (MT-CYB) from Puffinus opisthomelas (Black-vented shearwater).